The chain runs to 1755 residues: Transposon Ty1-PR1 Gag-Pol polyprotein (1755 aa).

Polar residues-rich tracts occupy residues 1-23 (MESQ…SVTS), 48-60 (TKAN…TPAS), 71-93 (SPQT…MMTQ), and 127-152 (QSQF…GNTF). Disordered stretches follow at residues 1–93 (MESQ…MMTQ), 126–173 (PQSQ…RPPP), and 352–421 (GSRN…SKST). Residues 153–165 (TDSSSADSDMTST) show a composition bias toward low complexity. The interval 299 to 401 (NNGIHINNKV…NSKSKTARAH (103 aa)) is RNA-binding. The span at 402–418 (NVSTSNNSPSTDNDSIS) shows a compositional bias: low complexity. The residue at position 416 (Ser-416) is a Phosphoserine. The active-site For protease activity; shared with dimeric partner is the Asp-461. The integrase-type zinc finger-like stretch occupies residues 583–640 (NVHTSESTRKYPYPFIHRMLAHANAQTIRYSLKNNTITYFNESDVDWSSAIDYQCPDC). One can recognise an Integrase catalytic domain in the interval 660 to 835 (NSYEPFQYLH…AGLDISTLLP (176 aa)). 2 residues coordinate Mg(2+): Asp-671 and Asp-736. Disordered stretches follow at residues 956–1087 (SKAV…ETEK), 1092–1111 (RSPS…NIVP), and 1130–1187 (DLPL…DNET). Residues 960 to 969 (SPTDSTPPST) show a composition bias toward low complexity. Positions 1005–1015 (STPQISNIEST) are enriched in polar residues. A compositionally biased stretch (basic and acidic residues) spans 1038 to 1053 (ESSHASKSKDFRHSDS). Composition is skewed to polar residues over residues 1054 to 1082 (YSEN…QISD) and 1101 to 1111 (PENNSSHNIVP). The short motif at 1178–1212 (KKRSLEDNETEIKVSRDTWNTKNMRSLEPPRSKKR) is the Bipartite nuclear localization signal element. The 139-residue stretch at 1338 to 1476 (NNYYITQLDI…DILGLEIKYQ (139 aa)) folds into the Reverse transcriptase Ty1/copia-type domain. Asp-1346, Asp-1427, Asp-1428, Asp-1610, Glu-1652, and Asp-1685 together coordinate Mg(2+). One can recognise an RNase H Ty1/copia-type domain in the interval 1610–1752 (DASYGNQPYY…IKTFKLLTNK (143 aa)).

As to quaternary structure, the capsid protein forms a homotrimer, from which the VLPs are assembled. The protease is a homodimer, whose active site consists of two apposed aspartic acid residues. In terms of processing, initially, virus-like particles (VLPs) are composed of the structural unprocessed proteins Gag and Gag-Pol, and also contain the host initiator methionine tRNA (tRNA(i)-Met) which serves as a primer for minus-strand DNA synthesis, and a dimer of genomic Ty RNA. Processing of the polyproteins occurs within the particle and proceeds by an ordered pathway, called maturation. First, the protease (PR) is released by autocatalytic cleavage of the Gag-Pol polyprotein yielding capsid protein p45 and a Pol-p154 precursor protein. This cleavage is a prerequisite for subsequent processing of Pol-p154 at the remaining sites to release the mature structural and catalytic proteins. Maturation takes place prior to the RT reaction and is required to produce transposition-competent VLPs.

It localises to the cytoplasm. The protein localises to the nucleus. The enzyme catalyses DNA(n) + a 2'-deoxyribonucleoside 5'-triphosphate = DNA(n+1) + diphosphate. The catalysed reaction is Endonucleolytic cleavage to 5'-phosphomonoester.. Its function is as follows. Capsid protein (CA) is the structural component of the virus-like particle (VLP), forming the shell that encapsulates the retrotransposons dimeric RNA genome. The particles are assembled from trimer-clustered units and there are holes in the capsid shells that allow for the diffusion of macromolecules. CA also has nucleocapsid-like chaperone activity, promoting primer tRNA(i)-Met annealing to the multipartite primer-binding site (PBS), dimerization of Ty1 RNA and initiation of reverse transcription. The aspartyl protease (PR) mediates the proteolytic cleavages of the Gag and Gag-Pol polyproteins after assembly of the VLP. Functionally, reverse transcriptase/ribonuclease H (RT) is a multifunctional enzyme that catalyzes the conversion of the retro-elements RNA genome into dsDNA within the VLP. The enzyme displays a DNA polymerase activity that can copy either DNA or RNA templates, and a ribonuclease H (RNase H) activity that cleaves the RNA strand of RNA-DNA heteroduplexes during plus-strand synthesis and hydrolyzes RNA primers. The conversion leads to a linear dsDNA copy of the retrotransposon that includes long terminal repeats (LTRs) at both ends. In terms of biological role, integrase (IN) targets the VLP to the nucleus, where a subparticle preintegration complex (PIC) containing at least integrase and the newly synthesized dsDNA copy of the retrotransposon must transit the nuclear membrane. Once in the nucleus, integrase performs the integration of the dsDNA into the host genome. This chain is Transposon Ty1-PR1 Gag-Pol polyprotein (TY1B-PR1), found in Saccharomyces cerevisiae (strain ATCC 204508 / S288c) (Baker's yeast).